We begin with the raw amino-acid sequence, 2178 residues long: Toxin A (2178 aa).

The interval 1-93 (MLITREQLMK…RELIKNSRTS (93 aa)) is four-helical bundle. The region spanning 98–474 (KNLSFIWIGG…KPEVNSTVFF (377 aa)) is the GT44 domain. Residues 98–474 (KNLSFIWIGG…KPEVNSTVFF (377 aa)) form a glucosyltransferase region region. Residues 98-474 (KNLSFIWIGG…KPEVNSTVFF (377 aa)) form an N-acetylglucosaminyltransferase region region. UDP-N-acetyl-alpha-D-glucosamine contacts are provided by residues 103 to 105 (IWI), N141, 267 to 271 (SDILR), and 284 to 286 (DLD). 3 residues coordinate Mg(2+): D284, D286, and E520. UDP-N-acetyl-alpha-D-glucosamine is bound at residue 523–525 (SSW). An autoprocessing region region spans residues 549-806 (NYEDGLNFNK…RVEQLNKVAE (258 aa)). 3 residues coordinate 1D-myo-inositol hexakisphosphate: N557, K607, and K651. Positions 574–787 (VNSTKIYENY…QISNKYVVYW (214 aa)) constitute a Peptidase C80 domain. H657 functions as the For protease activity in the catalytic mechanism. The active-site Nucleophile; for protease activity is C707. 1D-myo-inositol hexakisphosphate-binding positions include 758-759 (KR) and K782. The segment at 807-1485 (FAKDINSIIQ…VYMEGKIFLN (679 aa)) is translocation region. Cell wall-binding repeat units lie at residues 1799-1818 (EYGW…INLI), 1820-1839 (KKGY…NTGV), 1870-1889 (YTGW…NSKA), 1890-1909 (VTGL…NGQM), 1910-1929 (QIKW…NTGE), 1931-1950 (IIGW…EGRL), 1951-1970 (LTGY…NING), 2004-2023 (YKGW…DSIA), 2024-2043 (VTGS…KTAV), 2045-2060 (TNGW…YVSN), 2064-2083 (VLGY…STGI), 2114-2133 (YTGW…YNSA), 2134-2153 (VTGW…KTGA), and 2155-2174 (TTGL…KGEQ).

It belongs to the clostridial glucosylating toxin (LCGT) family. The cofactor is Mn(2+). Requires Mg(2+) as cofactor. Post-translationally, undergoes autocatalytic cleavage to release the N-terminal part (N-acetylglucosaminyltransferase TcdA), which constitutes the active part of the toxin, in the host cytosol. 1D-myo-inositol hexakisphosphate-binding (InsP6) activates the peptidase C80 domain and promotes autoprocessing.

The protein localises to the secreted. Its subcellular location is the host endosome membrane. It localises to the host cytoplasm. It is found in the host cytosol. The protein resides in the host cell membrane. It carries out the reaction L-threonyl-[protein] + UDP-N-acetyl-alpha-D-glucosamine = 3-O-(N-acetyl-alpha-D-glucosaminyl)-L-threonyl-[protein] + UDP + H(+). With respect to regulation, protease activity is activated upon binding to 1D-myo-inositol hexakisphosphate (InsP6), which induces conformational reorganization. Precursor of a cytotoxin, which enters into host cells and mediates autoprocessing to release the active toxin (N-acetylglucosaminyltransferase TcdA) into the host cytosol. Once entered into host cells, acidification in the endosome promotes the membrane insertion of the translocation region and formation of a pore, leading to translocation of the GT44 and peptidase C80 domains across the endosomal membrane. This activates the peptidase C80 domain and autocatalytic processing, releasing the N-terminal part (N-acetylglucosaminyltransferase TcdA), which constitutes the active part of the toxin, in the cytosol. Functionally, active form of the toxin, which is released into the host cytosol following autoprocessing and inactivates small GTPases. Acts by mediating monoglycosylation of small GTPases of the Rho family (Rac1, RhoA, RhoG and Cdc42) in host cells at the conserved threonine residue located in the switch I region ('Thr-37/35'), using UDP-N-acetyl-alpha-D-glucosamine as the sugar donor. Monoglycosylation of host small GTPases completely prevents the recognition of the downstream effector, blocking the GTPases in their inactive form, leading to actin cytoskeleton disruption and cell death. This chain is Toxin A (tcdA), found in Clostridium novyi.